A 391-amino-acid chain; its full sequence is MGAVPGVVLLLMLAVLGIRAAPAPEECHKLTKPVTKADVQSVSGDWVLVWSVANTTERWICENLTSSYVEFKLHSDIIEYTERNLFLGNSCISFYSNLSASTEKQQQFSLNNLQMEEKGVVRPFNDNGTVKFFETCVDCLSMEYSGDIGRFLLIYRRDGVHQNVEVLKAAQDESQKLAECLGFSIDEPFIYDGVSDFCHKKSPEECHKLTKPVTKADVQSVSGDWVLVWSIDENSTISDDWKKLKTSYVEQRVDSGVIRFTERNMLKNNSCMTFKTNMTAGPESQNTFIYTSGKMEENGVVTVLDENGTVKFFETCADCLSMEYSGFFGHFLLIYRRDGVHQNVEVLKAAQDESQKLAECLGFSIDEPFIYDGVSDFCHKKSSPEVKPEQD.

The signal sequence occupies residues 1–20 (MGAVPGVVLLLMLAVLGIRA). Tandem repeats lie at residues 24–202 (PEEC…HKKS) and 203–391 (PEEC…PEQD). Residues asparagine 54, asparagine 63, asparagine 97, asparagine 234, asparagine 268, asparagine 277, and asparagine 307 are each glycosylated (N-linked (GlcNAc...) asparagine).

In terms of assembly, homodimer or heterodimer of PSTBP1 and PSTBP2. Glycosylated.

The protein localises to the secreted. Functionally, binds both saxitoxin and tetradotoxin. May play a role in toxin accumulation and/or excretion. This Takifugu pardalis (Panther puffer) protein is Saxitoxin and tetrodotoxin-binding protein 1 (psbp1).